We begin with the raw amino-acid sequence, 96 residues long: UPF0235 protein VV2877 (96 aa).

The protein belongs to the UPF0235 family.

This is UPF0235 protein VV2877 from Vibrio vulnificus (strain YJ016).